The sequence spans 498 residues: Angiopoietin-1 (498 aa).

A signal peptide spans 1–15; the sequence is MTVFLSFAFLAAILT. Positions 81 to 119 form a coiled coil; the sequence is QKLQHLEHVMENYTQWLQKLENYIVENMKSEMAQIQQNA. N-linked (GlcNAc...) asparagine glycans are attached at residues Asn92, Asn122, Asn154, Asn243, and Asn295. Positions 153–261 form a coiled coil; that stretch reads LNQTSRLEIQ…LELMDTVHNL (109 aa). The 221-residue stretch at 277–497 folds into the Fibrinogen C-terminal domain; the sequence is REEEKPFRDC…STTMMIRPLD (221 aa). 2 disulfides stabilise this stretch: Cys286/Cys315 and Cys439/Cys452.

As to quaternary structure, homooligomer. Interacts with TEK/TIE2. Interacts with SVEP1/polydom. Interacts with THBD; this interaction significantly inhibits the generation of activated PC and TAFIa/CPB2 by the thrombin/thrombomodulin complex. Glycosylated.

The protein resides in the secreted. In terms of biological role, binds and activates TEK/TIE2 receptor by inducing its dimerization and tyrosine phosphorylation. Plays an important role in the regulation of angiogenesis, endothelial cell survival, proliferation, migration, adhesion and cell spreading, reorganization of the actin cytoskeleton, but also maintenance of vascular quiescence. Required for normal angiogenesis and heart development during embryogenesis. After birth, activates or inhibits angiogenesis, depending on the context. Inhibits angiogenesis and promotes vascular stability in quiescent vessels, where endothelial cells have tight contacts. In quiescent vessels, ANGPT1 oligomers recruit TEK to cell-cell contacts, forming complexes with TEK molecules from adjoining cells, and this leads to preferential activation of phosphatidylinositol 3-kinase and the AKT1 signaling cascades. In migrating endothelial cells that lack cell-cell adhesions, ANGT1 recruits TEK to contacts with the extracellular matrix, leading to the formation of focal adhesion complexes, activation of PTK2/FAK and of the downstream kinases MAPK1/ERK2 and MAPK3/ERK1, and ultimately to the stimulation of sprouting angiogenesis. Mediates blood vessel maturation/stability. Implicated in endothelial developmental processes later and distinct from that of VEGF. Appears to play a crucial role in mediating reciprocal interactions between the endothelium and surrounding matrix and mesenchyme. The protein is Angiopoietin-1 (ANGPT1) of Homo sapiens (Human).